A 498-amino-acid chain; its full sequence is Protein nucleotidyltransferase YdiU (498 aa).

ATP-binding residues include glycine 88, glycine 90, arginine 91, lysine 111, aspartate 123, glycine 124, arginine 174, and arginine 181. Aspartate 250 functions as the Proton acceptor in the catalytic mechanism. 2 residues coordinate Mg(2+): asparagine 251 and aspartate 260. Aspartate 260 contributes to the ATP binding site.

This sequence belongs to the SELO family. Mg(2+) is required as a cofactor. Mn(2+) serves as cofactor.

It carries out the reaction L-seryl-[protein] + ATP = 3-O-(5'-adenylyl)-L-seryl-[protein] + diphosphate. The catalysed reaction is L-threonyl-[protein] + ATP = 3-O-(5'-adenylyl)-L-threonyl-[protein] + diphosphate. It catalyses the reaction L-tyrosyl-[protein] + ATP = O-(5'-adenylyl)-L-tyrosyl-[protein] + diphosphate. The enzyme catalyses L-histidyl-[protein] + UTP = N(tele)-(5'-uridylyl)-L-histidyl-[protein] + diphosphate. It carries out the reaction L-seryl-[protein] + UTP = O-(5'-uridylyl)-L-seryl-[protein] + diphosphate. The catalysed reaction is L-tyrosyl-[protein] + UTP = O-(5'-uridylyl)-L-tyrosyl-[protein] + diphosphate. Nucleotidyltransferase involved in the post-translational modification of proteins. It can catalyze the addition of adenosine monophosphate (AMP) or uridine monophosphate (UMP) to a protein, resulting in modifications known as AMPylation and UMPylation. The polypeptide is Protein nucleotidyltransferase YdiU (Methylorubrum populi (strain ATCC BAA-705 / NCIMB 13946 / BJ001) (Methylobacterium populi)).